Consider the following 210-residue polypeptide: Orotate phosphoribosyltransferase (210 aa).

K26 is a 5-phospho-alpha-D-ribose 1-diphosphate binding site. Position 34-35 (34-35 (FF)) interacts with orotate. Residues 72-73 (YK), R98, K99, K102, H104, and 123-131 (DDVITAGTA) contribute to the 5-phospho-alpha-D-ribose 1-diphosphate site. Orotate is bound by residues T127 and R155.

This sequence belongs to the purine/pyrimidine phosphoribosyltransferase family. PyrE subfamily. Homodimer. Requires Mg(2+) as cofactor.

It carries out the reaction orotidine 5'-phosphate + diphosphate = orotate + 5-phospho-alpha-D-ribose 1-diphosphate. It participates in pyrimidine metabolism; UMP biosynthesis via de novo pathway; UMP from orotate: step 1/2. In terms of biological role, catalyzes the transfer of a ribosyl phosphate group from 5-phosphoribose 1-diphosphate to orotate, leading to the formation of orotidine monophosphate (OMP). This chain is Orotate phosphoribosyltransferase, found in Legionella pneumophila (strain Paris).